The chain runs to 362 residues: S-adenosylmethionine decarboxylase proenzyme (362 aa).

Catalysis depends on residues Glu-13 and Glu-16. Ser-73 acts as the Schiff-base intermediate with substrate; via pyruvic acid in catalysis. A Pyruvic acid (Ser); by autocatalysis modification is found at Ser-73. Cys-87 acts as the Proton donor; for catalytic activity in catalysis. Active-site proton acceptor; for processing activity residues include Ser-236 and His-249.

This sequence belongs to the eukaryotic AdoMetDC family. Requires pyruvate as cofactor. Is synthesized initially as an inactive proenzyme. Formation of the active enzyme involves a self-maturation process in which the active site pyruvoyl group is generated from an internal serine residue via an autocatalytic post-translational modification. Two non-identical subunits are generated from the proenzyme in this reaction, and the pyruvate is formed at the N-terminus of the alpha chain, which is derived from the carboxyl end of the proenzyme. The post-translation cleavage follows an unusual pathway, termed non-hydrolytic serinolysis, in which the side chain hydroxyl group of the serine supplies its oxygen atom to form the C-terminus of the beta chain, while the remainder of the serine residue undergoes an oxidative deamination to produce ammonia and the pyruvoyl group blocking the N-terminus of the alpha chain.

It catalyses the reaction S-adenosyl-L-methionine + H(+) = S-adenosyl 3-(methylsulfanyl)propylamine + CO2. It functions in the pathway amine and polyamine biosynthesis; S-adenosylmethioninamine biosynthesis; S-adenosylmethioninamine from S-adenosyl-L-methionine: step 1/1. This chain is S-adenosylmethionine decarboxylase proenzyme (SAMDC), found in Datura stramonium (Jimsonweed).